Consider the following 445-residue polypeptide: MAHSHSGSVNYFESANKVIYEGKESTNPLAFKYYNSQEVIGGKTMKEHLRFSIAYWHTFTADGTDIFGAATMQRPWDHYKGMDLARARVDAAFELFEKLDAPFFAFHDRDIAPEGSTLKETNQNLDLIVDMIKDYMRTSGVKLLWNTANMFTNPRFVHGAATSCNADVFAYAAAQVKKGLETAKELGAENYVFWGGREGYETLLNTDLKFELDNMARFMHMAVDYAKEIGYTGQFLIEPKPKEPTTHQYDTDAATTIAFLKQYGLDNHFKLNLEANHATLAGHTFEHELRMARVHGLLGSVDANQGDPLLGWDTDEFPTDLYSATLAMYEILKNGGLGSGGLNFDAKVRRSSFEPDDLLYAHVAGMDTFARGLKAARKLIEDRVFEDVIQHRYRSFTEGIGLEIAEGRADFKTLEQYALNNQPIKNESGRQERLKAILNQYILQV.

Catalysis depends on residues histidine 107 and aspartate 110. Glutamate 238, glutamate 274, histidine 277, aspartate 302, aspartate 313, aspartate 315, and aspartate 345 together coordinate Mg(2+).

The protein belongs to the xylose isomerase family. Homotetramer. Requires Mg(2+) as cofactor.

The protein localises to the cytoplasm. It carries out the reaction alpha-D-xylose = alpha-D-xylulofuranose. The polypeptide is Xylose isomerase (Bacillus velezensis (strain DSM 23117 / BGSC 10A6 / LMG 26770 / FZB42) (Bacillus amyloliquefaciens subsp. plantarum)).